Consider the following 86-residue polypeptide: Large ribosomal subunit protein bL27 (86 aa).

Over residues 1–10 (MAQKKGGGST) the composition is skewed to gly residues. A disordered region spans residues 1–22 (MAQKKGGGSTRNGRDSESKRLG).

Belongs to the bacterial ribosomal protein bL27 family.

This Polynucleobacter asymbioticus (strain DSM 18221 / CIP 109841 / QLW-P1DMWA-1) (Polynucleobacter necessarius subsp. asymbioticus) protein is Large ribosomal subunit protein bL27.